The following is a 1034-amino-acid chain: FACT complex subunit spt-16 (1034 aa).

Composition is skewed to basic and acidic residues over residues 433–448 (EEQE…DQKK), 463–481 (TRNK…KELG), and 493–503 (SKQDGGTDEKK). The disordered stretch occupies residues 433–511 (EEQENRETER…KKVKKSNVSY (79 aa)). Residues 617–642 (LSTAFRQIKEMQKRFRTEEAEEREKD) adopt a coiled-coil conformation. Acidic residues-rich tracts occupy residues 926 to 950 (AESE…EADA) and 959 to 983 (SDED…DSDE). The interval 926-1034 (AESEGEDAGD…KAGPSHKRRK (109 aa)) is disordered. Basic and acidic residues predominate over residues 984–1020 (SEGKDWSDLEEEAAKADKRREVEDGGRDRDRDRDRKR). Positions 1021–1034 (PSSSKAGPSHKRRK) are enriched in basic residues.

Belongs to the peptidase M24 family. SPT16 subfamily. In terms of assembly, component of the FACT complex, a stable heterodimer of spt-16 and hmg-3 or hmg-4.

The protein resides in the nucleus. The protein localises to the chromosome. Its function is as follows. Component of the FACT complex, a general chromatin factor that acts to reorganize nucleosomes. The FACT complex is involved in multiple processes that require DNA as a template such as mRNA elongation, DNA replication and DNA repair. During transcription elongation the FACT complex acts as a histone chaperone that both destabilizes and restores nucleosomal structure. It facilitates the passage of RNA polymerase II and transcription by promoting the dissociation of one histone H2A-H2B dimer from the nucleosome, then subsequently promotes the reestablishment of the nucleosome following the passage of RNA polymerase II. This is FACT complex subunit spt-16 (spt-16) from Caenorhabditis briggsae.